A 180-amino-acid chain; its full sequence is Protein GrpE (180 aa).

Residues 1 to 25 (MSKKKAEDKQPIIKDEAVEEPKSDS) form a disordered region.

It belongs to the GrpE family. As to quaternary structure, homodimer.

It localises to the cytoplasm. In terms of biological role, participates actively in the response to hyperosmotic and heat shock by preventing the aggregation of stress-denatured proteins, in association with DnaK and GrpE. It is the nucleotide exchange factor for DnaK and may function as a thermosensor. Unfolded proteins bind initially to DnaJ; upon interaction with the DnaJ-bound protein, DnaK hydrolyzes its bound ATP, resulting in the formation of a stable complex. GrpE releases ADP from DnaK; ATP binding to DnaK triggers the release of the substrate protein, thus completing the reaction cycle. Several rounds of ATP-dependent interactions between DnaJ, DnaK and GrpE are required for fully efficient folding. This is Protein GrpE from Fructilactobacillus sanfranciscensis (Lactobacillus sanfranciscensis).